The sequence spans 194 residues: uncharacterized protein (194 aa).

The Exonuclease domain occupies 20-185 (RIFIDTETTG…ADCRMTLGII (166 aa)).

This is an uncharacterized protein from Escherichia coli (Bacteriophage 186).